Here is a 1876-residue protein sequence, read N- to C-terminus: 1,3-beta-glucan synthase component FKS1 (1876 aa).

Composition is skewed to polar residues over residues 1 to 25 (MNTDQQPYQGQTDYTQGPGNGQSQE) and 60 to 71 (QPPNESYDQDYT). The interval 1–108 (MNTDQQPYQG…PGTPGYDSYG (108 aa)) is disordered. The Cytoplasmic portion of the chain corresponds to 1 to 454 (MNTDQQPYQG…WLHLVTNFNR (454 aa)). K259 is covalently cross-linked (Glycyl lysine isopeptide (Lys-Gly) (interchain with G-Cter in ubiquitin)). Phosphothreonine is present on residues T269 and T272. Glycyl lysine isopeptide (Lys-Gly) (interchain with G-Cter in ubiquitin) cross-links involve residues K275 and K386. The chain crosses the membrane as a helical span at residues 455-475 (IWVMHISIFWMYFAYNSPTFY). Over 476–492 (THNYQQLVDNQPLAAYK) the chain is Extracellular. A helical membrane pass occupies residues 493–513 (WASCALGGTVASLIQIVATLC). The Cytoplasmic segment spans residues 514-531 (EWSFVPRKWAGAQHLSRR). Residues 532–552 (FWFLCIIFGINLGPIIFVFAY) form a helical membrane-spanning segment. Residues 553–563 (DKDTVYSTAAH) lie on the Extracellular side of the membrane. Residues 564–584 (VVAAVMFFVAVATIIFFSIMP) traverse the membrane as a helical segment. Residues 585 to 621 (LGGLFTSYMKKSTRRYVASQTFTAAFAPLHGLDRWMS) are Cytoplasmic-facing. A helical membrane pass occupies residues 622-642 (YLVWVTVFAAKYSESYYFLVL). The Extracellular portion of the chain corresponds to 643–678 (SLRDPIRILSTTAMRCTGEYWWGAVLCKVQPKIVLG). A helical membrane pass occupies residues 679 to 699 (LVIATDFILFFLDTYLWYIIV). Residues 700–1358 (NTIFSVGKSF…QPAVDWVRRY (659 aa)) lie on the Cytoplasmic side of the membrane. Glycyl lysine isopeptide (Lys-Gly) (interchain with G-Cter in ubiquitin) cross-links involve residues K910 and K915. A helical transmembrane segment spans residues 1359–1379 (TLSIFIVFWIAFVPIVVQELI). Residues 1380 to 1444 (ERGLWKATQR…RIPFSILYSR (65 aa)) lie on the Extracellular side of the membrane. Residues 1445 to 1465 (FAGSAIYMGARSMLMLLFGTV) traverse the membrane as a helical segment. The Cytoplasmic segment spans residues 1466-1469 (AHWQ). A helical membrane pass occupies residues 1470 to 1490 (APLLWFWASLSSLIFAPFVFN). Topologically, residues 1491-1560 (PHQFAWEDFF…DASRAHRTNL (70 aa)) are extracellular. Glycyl lysine isopeptide (Lys-Gly) (interchain with G-Cter in ubiquitin) cross-links involve residues K1539 and K1547. Residues 1561-1581 (IMAEIIPCAIYAAGCFIAFTF) form a helical membrane-spanning segment. The Cytoplasmic portion of the chain corresponds to 1582-1601 (INAQTGVKTTDDDRVNSVLR). A helical transmembrane segment spans residues 1602 to 1622 (IIICTLAPIAVNLGVLFFCMG). Over 1623–1643 (MSCCSGPLFGMCCKKTGSVMA) the chain is Extracellular. The helical transmembrane segment at 1644–1664 (GIAHGVAVIVHIAFFIVMWVL) threads the bilayer. Residues 1665–1672 (ESFNFVRM) are Cytoplasmic-facing. The chain crosses the membrane as a helical span at residues 1673 to 1695 (LIGVVTCIQCQRLIFHCMTALML). Topologically, residues 1696–1802 (TREFKNDHAN…RKRMVKKYCS (107 aa)) are extracellular. Residues 1803–1823 (LYFLVLAIFAGCIIGPAVASA) form a helical membrane-spanning segment. The Cytoplasmic segment spans residues 1824-1876 (KIHKHIGDSLDGVVHNLFQPINTTNNDTGSQMSTYQSHYYTHTPSLKTWSTIK).

The protein belongs to the glycosyltransferase 48 family. In terms of assembly, component of the 1,3-beta-glucan synthase (GS) complex, composed of two alternate catalytic subunits FKS1 or GSC2, and a regulatory subunit RHO1. Interacts with RHO1, which is a GTP-binding protein.

The protein resides in the mitochondrion. It is found in the cell membrane. The enzyme catalyses [(1-&gt;3)-beta-D-glucosyl](n) + UDP-alpha-D-glucose = [(1-&gt;3)-beta-D-glucosyl](n+1) + UDP + H(+). Its function is as follows. Alternate catalytic subunit of the 1,3-beta-glucan synthase (GS) complex. Synthesizes 1,3-beta-glucan, a major structural component of the yeast cell wall. Involved in cell wall synthesis, maintenance and remodeling. This Saccharomyces cerevisiae (strain ATCC 204508 / S288c) (Baker's yeast) protein is 1,3-beta-glucan synthase component FKS1 (FKS1).